The primary structure comprises 949 residues: Probable transcriptional regulatory protein STB4 (949 aa).

A DNA-binding region (zn(2)-C6 fungal-type) is located at residues 87–113 (CELCKKRKVKCDGNNPCLNCSKHQKEC). 2 stretches are compositionally biased toward low complexity: residues 164-178 (DGVS…NPNS) and 200-212 (SGSN…NNNS). 2 disordered regions span residues 164–214 (DGVS…NSFP) and 862–888 (GERE…ATRS). A compositionally biased stretch (basic and acidic residues) spans 862-874 (GEREENADERQEN).

Its subcellular location is the nucleus. In terms of biological role, binds to SIN3. This chain is Probable transcriptional regulatory protein STB4 (STB4), found in Saccharomyces cerevisiae (strain ATCC 204508 / S288c) (Baker's yeast).